Consider the following 253-residue polypeptide: 5-oxoprolinase subunit A (253 aa).

Belongs to the LamB/PxpA family. As to quaternary structure, forms a complex composed of PxpA, PxpB and PxpC.

It catalyses the reaction 5-oxo-L-proline + ATP + 2 H2O = L-glutamate + ADP + phosphate + H(+). Its function is as follows. Catalyzes the cleavage of 5-oxoproline to form L-glutamate coupled to the hydrolysis of ATP to ADP and inorganic phosphate. In Bacillus cereus (strain ATCC 10987 / NRS 248), this protein is 5-oxoprolinase subunit A.